Consider the following 232-residue polypeptide: Phosphatidylserine decarboxylase proenzyme (232 aa).

S190 serves as the catalytic Schiff-base intermediate with substrate; via pyruvic acid. S190 carries the post-translational modification Pyruvic acid (Ser); by autocatalysis.

It belongs to the phosphatidylserine decarboxylase family. PSD-A subfamily. As to quaternary structure, heterodimer of a large membrane-associated beta subunit and a small pyruvoyl-containing alpha subunit. It depends on pyruvate as a cofactor. Is synthesized initially as an inactive proenzyme. Formation of the active enzyme involves a self-maturation process in which the active site pyruvoyl group is generated from an internal serine residue via an autocatalytic post-translational modification. Two non-identical subunits are generated from the proenzyme in this reaction, and the pyruvate is formed at the N-terminus of the alpha chain, which is derived from the carboxyl end of the proenzyme. The post-translation cleavage follows an unusual pathway, termed non-hydrolytic serinolysis, in which the side chain hydroxyl group of the serine supplies its oxygen atom to form the C-terminus of the beta chain, while the remainder of the serine residue undergoes an oxidative deamination to produce ammonia and the pyruvoyl prosthetic group on the alpha chain.

The protein resides in the cell membrane. It carries out the reaction a 1,2-diacyl-sn-glycero-3-phospho-L-serine + H(+) = a 1,2-diacyl-sn-glycero-3-phosphoethanolamine + CO2. It functions in the pathway phospholipid metabolism; phosphatidylethanolamine biosynthesis; phosphatidylethanolamine from CDP-diacylglycerol: step 2/2. In terms of biological role, catalyzes the formation of phosphatidylethanolamine (PtdEtn) from phosphatidylserine (PtdSer). This chain is Phosphatidylserine decarboxylase proenzyme, found in Rhizobium etli (strain CIAT 652).